Consider the following 141-residue polypeptide: Oleosin 14.9 kDa (141 aa).

Basic and acidic residues predominate over residues 1–22 (MADQTRTHHEMISRDSTQEAHP). The interval 1 to 24 (MADQTRTHHEMISRDSTQEAHPKA) is disordered. Positions 1–29 (MADQTRTHHEMISRDSTQEAHPKARQMVK) are polar. Residues 30–141 (AATAVTAGGS…NIGVQHQQVS (112 aa)) are hydrophobic. 3 helical membrane-spanning segments follow: residues 38–58 (GSLLVLSGLTLAGTVIALTVA), 60–80 (PLLVIFSPVLVPAVVTVALII), and 81–101 (TGFLASGGFGIAAITAFSWLY).

This sequence belongs to the oleosin family.

The protein resides in the lipid droplet. The protein localises to the membrane. In terms of biological role, may have a structural role to stabilize the lipid body during desiccation of the seed by preventing coalescence of the oil. Probably interacts with both lipid and phospholipid moieties of lipid bodies. May also provide recognition signals for specific lipase anchorage in lipolysis during seedling growth. In Arabidopsis thaliana (Mouse-ear cress), this protein is Oleosin 14.9 kDa (OL3).